We begin with the raw amino-acid sequence, 429 residues long: Ribosomal RNA small subunit methyltransferase B (429 aa).

S-adenosyl-L-methionine-binding positions include 254-260 (CAAPGGK), Asp-277, Asp-303, and Asp-322. Cys-375 serves as the catalytic Nucleophile. Residues 397–419 (ALSETGTPDQPGQQNLPGGEEGD) form a disordered region. Positions 400–412 (ETGTPDQPGQQNL) are enriched in polar residues.

This sequence belongs to the class I-like SAM-binding methyltransferase superfamily. RsmB/NOP family.

The protein localises to the cytoplasm. It catalyses the reaction cytidine(967) in 16S rRNA + S-adenosyl-L-methionine = 5-methylcytidine(967) in 16S rRNA + S-adenosyl-L-homocysteine + H(+). Its function is as follows. Specifically methylates the cytosine at position 967 (m5C967) of 16S rRNA. The protein is Ribosomal RNA small subunit methyltransferase B of Salmonella enteritidis PT4 (strain P125109).